The sequence spans 505 residues: DEAD-box ATP-dependent RNA helicase 38 (505 aa).

Residues 1 to 81 form a disordered region; sequence MADGGKPPTP…DQGPPLLDDS (81 aa). A compositionally biased stretch (low complexity) spans 27 to 44; the sequence is KAAAAAEAASSSSSNEPA. The Q motif signature appears at 100–129; sequence AAFEDLKLTPELLKGLHDEMGFSRPSKIQA. The 177-residue stretch at 134–310 folds into the Helicase ATP-binding domain; sequence MILTPPYKDL…TRVIKDGNQI (177 aa). 147–154 is an ATP binding site; sequence AHNGSGKT. The DEAD box signature appears at 254–257; sequence DEAD. The region spanning 338 to 493 is the Helicase C-terminal domain; sequence VIKDKIFEFG…EVRNWQSEED (156 aa).

It belongs to the DEAD box helicase family. DDX19/DBP5 subfamily.

It localises to the cytoplasm. Its subcellular location is the nucleus. The enzyme catalyses ATP + H2O = ADP + phosphate + H(+). In terms of biological role, ATP-dependent RNA helicase essential for mRNA export from the nucleus. Plays an important role in the positive regulation of CBF/DREB transcription factors. The sequence is that of DEAD-box ATP-dependent RNA helicase 38 from Oryza sativa subsp. japonica (Rice).